The primary structure comprises 405 residues: Aminodeoxyfutalosine deaminase (405 aa).

A divalent metal cation is bound by residues His-61 and His-63. Substrate-binding residues include Glu-141, Ser-145, and His-179. His-206 lines the a divalent metal cation pocket. The active-site Proton donor is the Glu-209. Asp-306 contributes to the a divalent metal cation binding site.

It belongs to the metallo-dependent hydrolases superfamily. A divalent metal cation is required as a cofactor.

The enzyme catalyses 6-amino-6-deoxyfutalosine + H2O + H(+) = futalosine + NH4(+). The protein operates within quinol/quinone metabolism; menaquinone biosynthesis. Its function is as follows. Catalyzes the deamination of aminodeoxyfutalosine (AFL) into futalosine (FL), a step in the biosynthesis of menaquinone (MK, vitamin K2). To a lesser extent, can also deaminate 5'-methylthioadenosine. The protein is Aminodeoxyfutalosine deaminase of Nitratiruptor sp. (strain SB155-2).